The chain runs to 506 residues: Chromodomain Y-like protein 2 (506 aa).

A Chromo domain is found at 7–67 (YEVERIVDKR…LHMSKDKRIK (61 aa)). Positions 64-177 (KRIKSGKQSS…RHFGNGSHQP (114 aa)) are disordered. Over residues 88 to 98 (KLSHRPSDPGK) the composition is skewed to basic and acidic residues. Over residues 101 to 120 (GTSHKRKRINPPLAKPKKGY) the composition is skewed to basic residues. Polar residues predominate over residues 133–143 (KTVSYRTTPSG).

As to quaternary structure, interacts (via chromo domain) with histone H3K9me3. As to expression, ubiquitously expressed.

The protein resides in the nucleus. This Homo sapiens (Human) protein is Chromodomain Y-like protein 2 (CDYL2).